Reading from the N-terminus, the 271-residue chain is Ribosomal RNA small subunit methyltransferase A (271 aa).

S-adenosyl-L-methionine-binding residues include histidine 14, leucine 16, glycine 41, glutamate 63, aspartate 89, and asparagine 107.

This sequence belongs to the class I-like SAM-binding methyltransferase superfamily. rRNA adenine N(6)-methyltransferase family. RsmA subfamily.

It is found in the cytoplasm. The catalysed reaction is adenosine(1518)/adenosine(1519) in 16S rRNA + 4 S-adenosyl-L-methionine = N(6)-dimethyladenosine(1518)/N(6)-dimethyladenosine(1519) in 16S rRNA + 4 S-adenosyl-L-homocysteine + 4 H(+). Specifically dimethylates two adjacent adenosines (A1518 and A1519) in the loop of a conserved hairpin near the 3'-end of 16S rRNA in the 30S particle. May play a critical role in biogenesis of 30S subunits. The polypeptide is Ribosomal RNA small subunit methyltransferase A (Lawsonia intracellularis (strain PHE/MN1-00)).